The following is a 128-amino-acid chain: Azurin (128 aa).

The 128-residue stretch at 1–128 folds into the Plastocyanin-like domain; the sequence is AECKVTVDST…SMMKGTVTLK (128 aa). A disulfide bridge links cysteine 3 with cysteine 26. Residues histidine 46, cysteine 112, histidine 117, and methionine 121 each coordinate Cu cation.

The protein localises to the periplasm. In terms of biological role, transfers electrons from cytochrome c551 to cytochrome oxidase. This chain is Azurin, found in Pseudomonas putida (Arthrobacter siderocapsulatus).